The following is a 212-amino-acid chain: Thymidylate kinase (212 aa).

10–17 (GLEGAGKT) is a binding site for ATP.

It belongs to the thymidylate kinase family.

It carries out the reaction dTMP + ATP = dTDP + ADP. Phosphorylation of dTMP to form dTDP in both de novo and salvage pathways of dTTP synthesis. This Yersinia pseudotuberculosis serotype O:3 (strain YPIII) protein is Thymidylate kinase.